Consider the following 411-residue polypeptide: MSFIEEFINKGYFHQCTDLDRLTTITKETKIAAYIGFDCTATSLHIGSLMQIMILRLLQQHGHKPIVIIGGGTSKIGDPTWKDEARKILSKEDIAKNAEGIKKSLSKFIKFGEGESDAIMLDNAEWLDSLNYLDFLRDFGSYFSVNRMLTMDSVRLRLEREQHLSFLEFNYMLLQAYDFYYLSKHYNCSLQLGGSDQWGNIVMGADLTRKISGKDVFGMTTPLLTTSSGAKMGKTAAGAVWLNEDLLSPYDYYQYWRNCEDADIVRFAKLYSELTQEELNKFESLAAEDINSAKKQLAYELTKLCHSEQAAKSALETAVKIFEEGQIDENLPIVVLEQEVLQAGISAYELFHEAGLASSKSEARKLIRGKGAKINDRLVEDENMIINTTFLLDKNVIKLSAGKKRHILVRV.

Y34 is an L-tyrosine binding site. Positions 39 to 48 (CTATSLHIGS) match the 'HIGH' region motif. Residues Y171 and Q175 each contribute to the L-tyrosine site. The short motif at 231–235 (KMGKT) is the 'KMSKS' region element. K234 contacts ATP. Residues 345 to 411 (ISAYELFHEA…GKKRHILVRV (67 aa)) enclose the S4 RNA-binding domain.

This sequence belongs to the class-I aminoacyl-tRNA synthetase family. TyrS type 1 subfamily. In terms of assembly, homodimer.

It localises to the cytoplasm. It carries out the reaction tRNA(Tyr) + L-tyrosine + ATP = L-tyrosyl-tRNA(Tyr) + AMP + diphosphate + H(+). Catalyzes the attachment of tyrosine to tRNA(Tyr) in a two-step reaction: tyrosine is first activated by ATP to form Tyr-AMP and then transferred to the acceptor end of tRNA(Tyr). This Rickettsia felis (strain ATCC VR-1525 / URRWXCal2) (Rickettsia azadi) protein is Tyrosine--tRNA ligase.